The chain runs to 359 residues: Putative ankyrin repeat protein R190 (359 aa).

ANK repeat units follow at residues 72–103, 105–133, 142–173, 203–234, 236–260, 261–287, and 288–317; these read RLMEIYHKMIIIDNNMDLLDLLFEIMSDDFRC, DCVILDLAIRHQRTDVFNKYIILGFDLNR, DEIILWYHQIKKYDTGIELCDYLIDNGASISI, LGNLLFWYLRNYYNVNIDIVETILSNGIDINN, HEYSYMLIGKFNVPIMNLFIRYGLI, IHDDVIDDACRYGNHLLVDYLMEIGHK, and PSKQIITNVIENHNVNIIKLFVKYNIDLSD.

This chain is Putative ankyrin repeat protein R190, found in Acanthamoeba polyphaga (Amoeba).